The primary structure comprises 334 residues: Glyceraldehyde-3-phosphate dehydrogenase (334 aa).

NAD(+) contacts are provided by residues 12–13 (TI) and Gly111. A D-glyceraldehyde 3-phosphate-binding site is contributed by 140 to 142 (SCN). Cys141 functions as the Nucleophile in the catalytic mechanism. Residue Arg167 coordinates NAD(+). Residue 192 to 193 (HG) coordinates D-glyceraldehyde 3-phosphate. Gln298 lines the NAD(+) pocket.

The protein belongs to the glyceraldehyde-3-phosphate dehydrogenase family. In terms of assembly, homotetramer.

The protein resides in the encapsulin nanocompartment. It catalyses the reaction D-glyceraldehyde 3-phosphate + phosphate + NADP(+) = (2R)-3-phospho-glyceroyl phosphate + NADPH + H(+). The enzyme catalyses D-glyceraldehyde 3-phosphate + phosphate + NAD(+) = (2R)-3-phospho-glyceroyl phosphate + NADH + H(+). It functions in the pathway carbohydrate degradation; glycolysis; pyruvate from D-glyceraldehyde 3-phosphate: step 1/5. Its function is as follows. Possible cargo protein of a type 4B encapsulin nanocompartment. Active in the presence of NAD and NADP, prefers NADP. This Pyrococcus furiosus (strain ATCC 43587 / DSM 3638 / JCM 8422 / Vc1) protein is Glyceraldehyde-3-phosphate dehydrogenase (gap).